Consider the following 204-residue polypeptide: Large ribosomal subunit protein eL15 (204 aa).

This sequence belongs to the eukaryotic ribosomal protein eL15 family. In terms of assembly, component of the large ribosomal subunit.

Its subcellular location is the cytoplasm. In terms of biological role, component of the large ribosomal subunit. The ribosome is a large ribonucleoprotein complex responsible for the synthesis of proteins in the cell. This is Large ribosomal subunit protein eL15 (rpl15) from Mylopharyngodon piceus (Black carp).